Here is a 494-residue protein sequence, read N- to C-terminus: Alpha-amylase-related protein (494 aa).

The first 20 residues, 1–20, serve as a signal peptide directing secretion; the sequence is MIKFALALTLCLAGASLSLA. Gln-21 bears the Pyrrolidone carboxylic acid mark. Cysteines 48 and 104 form a disulfide. Residues Asn-118, Gln-169, and Asp-178 each contribute to the Ca(2+) site. Residues Cys-157 and Cys-171 are joined by a disulfide bond. Arg-206 contributes to the chloride binding site. Asp-208 serves as the catalytic Nucleophile. His-212 contributes to the Ca(2+) binding site. Glu-245 acts as the Proton donor in catalysis. Residues Asn-308 and Arg-343 each contribute to the chloride site. 3 disulfides stabilise this stretch: Cys-376-Cys-382, Cys-418-Cys-441, and Cys-448-Cys-460.

Belongs to the glycosyl hydrolase 13 family. Monomer. Requires Ca(2+) as cofactor. Chloride is required as a cofactor.

The protein resides in the secreted. It carries out the reaction Endohydrolysis of (1-&gt;4)-alpha-D-glucosidic linkages in polysaccharides containing three or more (1-&gt;4)-alpha-linked D-glucose units.. The protein is Alpha-amylase-related protein (Amyrel) of Drosophila serrata (Fruit fly).